Here is a 643-residue protein sequence, read N- to C-terminus: 1-deoxy-D-xylulose-5-phosphate synthase (643 aa).

Thiamine diphosphate-binding positions include His-78 and 119–121 (AHS). Position 150 (Asp-150) interacts with Mg(2+). Thiamine diphosphate is bound by residues 151 to 152 (GS), Asn-179, Tyr-288, and Glu-370. Asn-179 serves as a coordination point for Mg(2+).

It belongs to the transketolase family. DXPS subfamily. In terms of assembly, homodimer. Mg(2+) is required as a cofactor. The cofactor is thiamine diphosphate.

It catalyses the reaction D-glyceraldehyde 3-phosphate + pyruvate + H(+) = 1-deoxy-D-xylulose 5-phosphate + CO2. Its pathway is metabolic intermediate biosynthesis; 1-deoxy-D-xylulose 5-phosphate biosynthesis; 1-deoxy-D-xylulose 5-phosphate from D-glyceraldehyde 3-phosphate and pyruvate: step 1/1. Its function is as follows. Catalyzes the acyloin condensation reaction between C atoms 2 and 3 of pyruvate and glyceraldehyde 3-phosphate to yield 1-deoxy-D-xylulose-5-phosphate (DXP). In Brucella melitensis biotype 2 (strain ATCC 23457), this protein is 1-deoxy-D-xylulose-5-phosphate synthase.